A 303-amino-acid polypeptide reads, in one-letter code: Proteasome subunit beta (303 aa).

Positions 1–67 (MTWQFPDRLS…SGGTGQLPHG (67 aa)) are cleaved as a propeptide — removed in mature form; by autocatalysis. Threonine 68 functions as the Nucleophile in the catalytic mechanism.

The protein belongs to the peptidase T1B family. In terms of assembly, the 20S proteasome core is composed of 14 alpha and 14 beta subunits that assemble into four stacked heptameric rings, resulting in a barrel-shaped structure. The two inner rings, each composed of seven catalytic beta subunits, are sandwiched by two outer rings, each composed of seven alpha subunits. The catalytic chamber with the active sites is on the inside of the barrel. Has a gated structure, the ends of the cylinder being occluded by the N-termini of the alpha-subunits. Is capped by the proteasome-associated ATPase, ARC.

The protein localises to the cytoplasm. The catalysed reaction is Cleavage of peptide bonds with very broad specificity.. It participates in protein degradation; proteasomal Pup-dependent pathway. With respect to regulation, the formation of the proteasomal ATPase ARC-20S proteasome complex, likely via the docking of the C-termini of ARC into the intersubunit pockets in the alpha-rings, may trigger opening of the gate for substrate entry. Interconversion between the open-gate and close-gate conformations leads to a dynamic regulation of the 20S proteasome proteolysis activity. Its function is as follows. Component of the proteasome core, a large protease complex with broad specificity involved in protein degradation. The chain is Proteasome subunit beta from Mycolicibacterium paratuberculosis (strain ATCC BAA-968 / K-10) (Mycobacterium paratuberculosis).